Reading from the N-terminus, the 445-residue chain is Phosphoglucosamine mutase (445 aa).

Ser102 (phosphoserine intermediate) is an active-site residue. Positions 102, 241, 243, and 245 each coordinate Mg(2+). Phosphoserine is present on Ser102.

Belongs to the phosphohexose mutase family. It depends on Mg(2+) as a cofactor. In terms of processing, activated by phosphorylation.

It catalyses the reaction alpha-D-glucosamine 1-phosphate = D-glucosamine 6-phosphate. Its function is as follows. Catalyzes the conversion of glucosamine-6-phosphate to glucosamine-1-phosphate. The sequence is that of Phosphoglucosamine mutase from Klebsiella pneumoniae (strain 342).